The chain runs to 224 residues: N-(5'-phosphoribosyl)anthranilate isomerase (224 aa).

The protein belongs to the TrpF family.

The enzyme catalyses N-(5-phospho-beta-D-ribosyl)anthranilate = 1-(2-carboxyphenylamino)-1-deoxy-D-ribulose 5-phosphate. It participates in amino-acid biosynthesis; L-tryptophan biosynthesis; L-tryptophan from chorismate: step 3/5. The protein is N-(5'-phosphoribosyl)anthranilate isomerase of Allorhizobium ampelinum (strain ATCC BAA-846 / DSM 112012 / S4) (Agrobacterium vitis (strain S4)).